A 333-amino-acid chain; its full sequence is Adenosine deaminase (333 aa).

Positions 12 and 14 each coordinate Zn(2+). 3 residues coordinate substrate: histidine 14, aspartate 16, and glycine 170. Residue histidine 197 participates in Zn(2+) binding. Residue glutamate 200 is the Proton donor of the active site. A Zn(2+)-binding site is contributed by aspartate 278. Aspartate 279 provides a ligand contact to substrate.

Belongs to the metallo-dependent hydrolases superfamily. Adenosine and AMP deaminases family. Adenosine deaminase subfamily. It depends on Zn(2+) as a cofactor.

It catalyses the reaction adenosine + H2O + H(+) = inosine + NH4(+). It carries out the reaction 2'-deoxyadenosine + H2O + H(+) = 2'-deoxyinosine + NH4(+). Catalyzes the hydrolytic deamination of adenosine and 2-deoxyadenosine. The sequence is that of Adenosine deaminase from Salmonella dublin (strain CT_02021853).